The primary structure comprises 383 residues: Protein RecA (383 aa).

79 to 86 (GPESSGKT) contributes to the ATP binding site. Residues 347 to 369 (IEEDNTEEKQSSKEKETDEKADK) form a disordered region. Residues 353 to 369 (EEKQSSKEKETDEKADK) show a composition bias toward basic and acidic residues.

It belongs to the RecA family.

It is found in the cytoplasm. Functionally, can catalyze the hydrolysis of ATP in the presence of single-stranded DNA, the ATP-dependent uptake of single-stranded DNA by duplex DNA, and the ATP-dependent hybridization of homologous single-stranded DNAs. It interacts with LexA causing its activation and leading to its autocatalytic cleavage. The polypeptide is Protein RecA (Streptococcus mutans serotype c (strain ATCC 700610 / UA159)).